Here is a 159-residue protein sequence, read N- to C-terminus: Phosphopantetheine adenylyltransferase (159 aa).

Position 10 (Thr-10) interacts with substrate. Residues 10 to 11 (TF) and His-18 each bind ATP. Residues Lys-42, Met-74, and Arg-88 each coordinate substrate. ATP is bound by residues 89–91 (GLR), Glu-99, and 124–130 (WSFISSS).

The protein belongs to the bacterial CoaD family. As to quaternary structure, homohexamer. It depends on Mg(2+) as a cofactor.

The protein localises to the cytoplasm. The enzyme catalyses (R)-4'-phosphopantetheine + ATP + H(+) = 3'-dephospho-CoA + diphosphate. It functions in the pathway cofactor biosynthesis; coenzyme A biosynthesis; CoA from (R)-pantothenate: step 4/5. Reversibly transfers an adenylyl group from ATP to 4'-phosphopantetheine, yielding dephospho-CoA (dPCoA) and pyrophosphate. This chain is Phosphopantetheine adenylyltransferase, found in Yersinia pestis.